Here is a 426-residue protein sequence, read N- to C-terminus: MHKKEIIALLLAGGQGSRLGVLTKNIAKPAVLYGGKYRIIDFSLSNCVNSDIDTVGVLTQYQPLELNAHIGIGKPWDMDRINGGVTILSPYLKAEIGEWYKGTANAVFQNIHYVDKYSPKYVIILSGDHVYKMNYSQMLDFHKENNADATISVINVPWEEASRYGIMNTYENGKIYEFEEKPQNPKSNLASMGVYIFNWEVLKEYLIRDDQNEESAHDFGKNIIPMMLKEGRSMWAYKFNGYWRDVGTIQAYWESNMDLISRVPEFNLFDPAWKIYTPNPVKPAHYIGPTGSVKKSIVAEGCMIYGSVRNSVLFPGVYVSEGAEIVDSIVMSDSVIGENTQIYKCIIGEEVKVGKNVRMGIGENIPNELKPHLYDSGITVVGEKAVVPDGCQIGKNVVIDPYITAEEFPSLNIESAKSVLKGGETE.

Residues Tyr-100, Gly-165, 180–181, and Ser-191 contribute to the alpha-D-glucose 1-phosphate site; that span reads EK.

It belongs to the bacterial/plant glucose-1-phosphate adenylyltransferase family. As to quaternary structure, homotetramer.

The catalysed reaction is alpha-D-glucose 1-phosphate + ATP + H(+) = ADP-alpha-D-glucose + diphosphate. It participates in glycan biosynthesis; glycogen biosynthesis. In terms of biological role, involved in the biosynthesis of ADP-glucose, a building block required for the elongation reactions to produce glycogen. Catalyzes the reaction between ATP and alpha-D-glucose 1-phosphate (G1P) to produce pyrophosphate and ADP-Glc. This chain is Glucose-1-phosphate adenylyltransferase, found in Acetivibrio thermocellus (strain ATCC 27405 / DSM 1237 / JCM 9322 / NBRC 103400 / NCIMB 10682 / NRRL B-4536 / VPI 7372) (Clostridium thermocellum).